The chain runs to 883 residues: DNA mismatch repair protein MutS (883 aa).

Residue Gly633–Ser640 coordinates ATP.

This sequence belongs to the DNA mismatch repair MutS family.

In terms of biological role, this protein is involved in the repair of mismatches in DNA. It is possible that it carries out the mismatch recognition step. This protein has a weak ATPase activity. This is DNA mismatch repair protein MutS from Bordetella pertussis (strain Tohama I / ATCC BAA-589 / NCTC 13251).